The chain runs to 446 residues: ATP synthase subunit b-delta (446 aa).

The ATP synthase subunit b stretch occupies residues 1-168 (MSTFIGQLFG…PATADVDYPL (168 aa)). A helical transmembrane segment spans residues 4–24 (FIGQLFGFAVIVYLVWRFIVP). An ATP synthase subunit delta region spans residues 169–446 (LAKMRSASRR…LAAAEARLPD (278 aa)).

It in the N-terminal section; belongs to the ATPase B chain family. In the C-terminal section; belongs to the ATPase delta chain family. F-type ATPases have 2 components, F(1) - the catalytic core - and F(0) - the membrane proton channel. F(1) has five subunits: alpha(3), beta(3), gamma(1), delta(1), epsilon(1). F(0) has three main subunits: a(1), b(2) and c(10-14). The alpha and beta chains form an alternating ring which encloses part of the gamma chain. F(1) is attached to F(0) by a central stalk formed by the gamma and epsilon chains, while a peripheral stalk is formed by the delta and b chains.

The protein resides in the cell membrane. In terms of biological role, f(1)F(0) ATP synthase produces ATP from ADP in the presence of a proton or sodium gradient. F-type ATPases consist of two structural domains, F(1) containing the extramembraneous catalytic core and F(0) containing the membrane proton channel, linked together by a central stalk and a peripheral stalk. During catalysis, ATP synthesis in the catalytic domain of F(1) is coupled via a rotary mechanism of the central stalk subunits to proton translocation. Functionally, this fusion protein includes a component of the F(0) channel (subunit b) and of the F(1) subunit (subunit delta). Two copies of subunit b and one of delta together form the peripheral 'stator' stalk which links F(1) to F(0). The protein is ATP synthase subunit b-delta (atpFH) of Mycobacterium tuberculosis (strain CDC 1551 / Oshkosh).